A 460-amino-acid polypeptide reads, in one-letter code: Argininosuccinate lyase (460 aa).

It belongs to the lyase 1 family. Argininosuccinate lyase subfamily.

It is found in the cytoplasm. It catalyses the reaction 2-(N(omega)-L-arginino)succinate = fumarate + L-arginine. It participates in amino-acid biosynthesis; L-arginine biosynthesis; L-arginine from L-ornithine and carbamoyl phosphate: step 3/3. The sequence is that of Argininosuccinate lyase from Maridesulfovibrio salexigens (strain ATCC 14822 / DSM 2638 / NCIMB 8403 / VKM B-1763) (Desulfovibrio salexigens).